The sequence spans 248 residues: Triosephosphate isomerase (248 aa).

Residues Asn-11 and Lys-13 each coordinate substrate. His-95 functions as the Electrophile in the catalytic mechanism. Glu-165 functions as the Proton acceptor in the catalytic mechanism.

Belongs to the triosephosphate isomerase family. As to quaternary structure, homodimer.

The protein localises to the cytoplasm. It carries out the reaction dihydroxyacetone phosphate = methylglyoxal + phosphate. It catalyses the reaction D-glyceraldehyde 3-phosphate = dihydroxyacetone phosphate. Its pathway is carbohydrate degradation; glycolysis; D-glyceraldehyde 3-phosphate from glycerone phosphate: step 1/1. It participates in carbohydrate biosynthesis; gluconeogenesis. Functionally, triosephosphate isomerase is an extremely efficient metabolic enzyme that catalyzes the interconversion between dihydroxyacetone phosphate (DHAP) and D-glyceraldehyde-3-phosphate (G3P) in glycolysis and gluconeogenesis. In terms of biological role, it is also responsible for the non-negligible production of methylglyoxal a reactive cytotoxic side-product that modifies and can alter proteins, DNA and lipids. This chain is Triosephosphate isomerase (tpi1), found in Xenopus laevis (African clawed frog).